The primary structure comprises 305 residues: UDP-3-O-acyl-N-acetylglucosamine deacetylase (305 aa).

The Zn(2+) site is built by His-78, His-237, and Asp-241. The active-site Proton donor is His-264.

It belongs to the LpxC family. The cofactor is Zn(2+).

It carries out the reaction a UDP-3-O-[(3R)-3-hydroxyacyl]-N-acetyl-alpha-D-glucosamine + H2O = a UDP-3-O-[(3R)-3-hydroxyacyl]-alpha-D-glucosamine + acetate. It participates in glycolipid biosynthesis; lipid IV(A) biosynthesis; lipid IV(A) from (3R)-3-hydroxytetradecanoyl-[acyl-carrier-protein] and UDP-N-acetyl-alpha-D-glucosamine: step 2/6. Its function is as follows. Catalyzes the hydrolysis of UDP-3-O-myristoyl-N-acetylglucosamine to form UDP-3-O-myristoylglucosamine and acetate, the committed step in lipid A biosynthesis. This Burkholderia cenocepacia (strain HI2424) protein is UDP-3-O-acyl-N-acetylglucosamine deacetylase.